The primary structure comprises 429 residues: Glutamate dehydrogenase B (429 aa).

Residues 1–20 form a disordered region; that stretch reads MAQTPPPESAPSTDSEPETA. Lysine 119 is an active-site residue.

The protein belongs to the Glu/Leu/Phe/Val dehydrogenases family. As to quaternary structure, homohexamer.

The polypeptide is Glutamate dehydrogenase B (gdhB) (Halobacterium salinarum (strain ATCC 700922 / JCM 11081 / NRC-1) (Halobacterium halobium)).